The sequence spans 886 residues: Cytosolic carboxypeptidase-like protein 5 (886 aa).

The region spanning 157–570 (YPFSYSDCQD…AMAIAALDMA (414 aa)) is the Peptidase M14 domain. H252 and E255 together coordinate Zn(2+). Residues 344–353 (AKSPTNQQPT) show a composition bias toward polar residues. 2 disordered regions span residues 344–363 (AKSPTNQQPTLHLPPEAPLS) and 374–401 (EAHLGQSPDGENPATWPETEPAEEKTDP). H434 is a Zn(2+) binding site. E516 (proton donor/acceptor) is an active-site residue. 2 disordered regions span residues 602–737 (GLTS…RNMG) and 783–846 (TRLQ…PAFS). The span at 621 to 635 (PKSNNSLPVSCSENA) shows a compositional bias: polar residues. Low complexity predominate over residues 643 to 654 (STGTSTGGSSSS). The span at 655–666 (QQNSPQMKNSPS) shows a compositional bias: polar residues. Low complexity predominate over residues 714-737 (STTSSLAPSPTLASSGPTSSRNMG). Polar residues predominate over residues 805-815 (SSPTSPIPQTR). S841 carries the post-translational modification Phosphoserine.

This sequence belongs to the peptidase M14 family. The cofactor is Zn(2+). In terms of tissue distribution, widely expressed. Highly expressed in testis, and moderately in pituitary, brain, eye and kidney.

It is found in the cytoplasm. The protein resides in the cytosol. The protein localises to the nucleus. It localises to the cytoskeleton. Its subcellular location is the spindle. It is found in the midbody. It carries out the reaction gamma-L-glutamyl-L-glutamyl-[protein] + H2O = L-glutamyl-[protein] + L-glutamate. It catalyses the reaction (L-glutamyl)(n+1)-gamma-L-glutamyl-L-glutamyl-[protein] + H2O = (L-glutamyl)(n)-gamma-L-glutamyl-L-glutamyl-[protein] + L-glutamate. The enzyme catalyses C-terminal L-alpha-aminoacyl-L-glutamyl-[tubulin] + H2O = C-terminal L-alpha-aminoacyl-[tubulin] + L-glutamate. The catalysed reaction is C-terminal L-alpha-aminoacyl-L-glutamyl-L-glutamyl-[tubulin] + H2O = C-terminal L-alpha-aminoacyl-L-glutamyl-[tubulin] + L-glutamate. In terms of biological role, metallocarboxypeptidase that mediates deglutamylation of tubulin and non-tubulin target proteins. Catalyzes the removal of polyglutamate side chains present on the gamma-carboxyl group of glutamate residues within the C-terminal tail of alpha- and beta-tubulin. Cleaves alpha- and gamma-linked polyglutamate tubulin side-chain, as well as the branching point glutamate. Also catalyzes the removal of alpha-linked glutamate residues from the carboxy-terminus of alpha-tubulin. Mediates deglutamylation of nucleotidyltransferase CGAS, leading to CGAS antiviral defense response activation. The protein is Cytosolic carboxypeptidase-like protein 5 of Mus musculus (Mouse).